Reading from the N-terminus, the 191-residue chain is DNA-directed RNA polymerase subunit Rpo3 (191 aa).

This sequence belongs to the archaeal Rpo3/eukaryotic RPB3 RNA polymerase subunit family. As to quaternary structure, part of the RNA polymerase complex. Interacts with Rpo12. Forms an Rpo3-Rpo10-Rpo11-Rpo12 complex upon coexpression.

It is found in the cytoplasm. The enzyme catalyses RNA(n) + a ribonucleoside 5'-triphosphate = RNA(n+1) + diphosphate. In terms of biological role, DNA-dependent RNA polymerase (RNAP) catalyzes the transcription of DNA into RNA using the four ribonucleoside triphosphates as substrates. The chain is DNA-directed RNA polymerase subunit Rpo3 from Methanocaldococcus jannaschii (strain ATCC 43067 / DSM 2661 / JAL-1 / JCM 10045 / NBRC 100440) (Methanococcus jannaschii).